Reading from the N-terminus, the 461-residue chain is Early growth response factor homolog 1 (461 aa).

3 disordered regions span residues 1–25 (MALH…PSLN), 96–152 (TLMP…ELTL), and 232–308 (DVLH…YSSL). Composition is skewed to polar residues over residues 96–105 (TLMPAPSSSY), 129–144 (GSNS…GNSK), 249–265 (LGSS…SRPS), and 272–291 (QRTN…SMSP). The segment covering 299 to 308 (YSNSASYSSL) has biased composition (low complexity). C2H2-type zinc fingers lie at residues 374-398 (YKCP…IRIH), 404-426 (FQCR…VRTH), and 432-454 (FSCD…TKVH).

It belongs to the EGR C2H2-type zinc-finger protein family. Expressed in sheath cells and distal tip cells of the somatic gonad, as well as in the intestine and sperm (at protein level). Expression not observed in oocytes (at protein level).

Its subcellular location is the nucleus. It is found in the cytoplasm. The protein resides in the perinuclear region. Its function is as follows. Sequence-specific DNA-binding transcription factor. Plays a role in oocyte development, acting cell-autonomously in the somatic gonad. Involved in negative regulation of oocyte MAPK activation and inhibits oocyte maturation and ovulation. The sequence is that of Early growth response factor homolog 1 from Caenorhabditis elegans.